The sequence spans 1300 residues: ATP-dependent RNA helicase HrpA (1300 aa).

In terms of domain architecture, Helicase ATP-binding spans Leu87–Ser250. Gly100 to Thr107 contributes to the ATP binding site. Positions Asp197 to His200 match the DEAH box motif. Residues Gln274–Gly444 form the Helicase C-terminal domain.

The protein belongs to the DEAD box helicase family. DEAH subfamily.

It catalyses the reaction ATP + H2O = ADP + phosphate + H(+). Its function is as follows. Not yet known. This chain is ATP-dependent RNA helicase HrpA (hrpA), found in Escherichia coli (strain K12).